The following is a 761-amino-acid chain: Phosphoribosylformylglycinamidine synthase subunit PurL (761 aa).

The segment covering 1–13 (MTSRVDTVDNAAS) has biased composition (polar residues). A disordered region spans residues 1 to 23 (MTSRVDTVDNAASTPDHPQPFAE). Histidine 57 is an active-site residue. Residues tyrosine 60 and lysine 104 each contribute to the ATP site. Glutamate 106 is a Mg(2+) binding site. Substrate-binding positions include 107-110 (SHNH) and arginine 129. The Proton acceptor role is filled by histidine 108. Aspartate 130 is a Mg(2+) binding site. Glutamine 259 lines the substrate pocket. Position 287 (aspartate 287) interacts with Mg(2+). A substrate-binding site is contributed by 331-333 (ESQ). Asparagine 519 and glycine 556 together coordinate ATP. Mg(2+) is bound at residue asparagine 557. Serine 559 serves as a coordination point for substrate.

The protein belongs to the FGAMS family. As to quaternary structure, monomer. Part of the FGAM synthase complex composed of 1 PurL, 1 PurQ and 2 PurS subunits.

Its subcellular location is the cytoplasm. The enzyme catalyses N(2)-formyl-N(1)-(5-phospho-beta-D-ribosyl)glycinamide + L-glutamine + ATP + H2O = 2-formamido-N(1)-(5-O-phospho-beta-D-ribosyl)acetamidine + L-glutamate + ADP + phosphate + H(+). It functions in the pathway purine metabolism; IMP biosynthesis via de novo pathway; 5-amino-1-(5-phospho-D-ribosyl)imidazole from N(2)-formyl-N(1)-(5-phospho-D-ribosyl)glycinamide: step 1/2. Part of the phosphoribosylformylglycinamidine synthase complex involved in the purines biosynthetic pathway. Catalyzes the ATP-dependent conversion of formylglycinamide ribonucleotide (FGAR) and glutamine to yield formylglycinamidine ribonucleotide (FGAM) and glutamate. The FGAM synthase complex is composed of three subunits. PurQ produces an ammonia molecule by converting glutamine to glutamate. PurL transfers the ammonia molecule to FGAR to form FGAM in an ATP-dependent manner. PurS interacts with PurQ and PurL and is thought to assist in the transfer of the ammonia molecule from PurQ to PurL. The chain is Phosphoribosylformylglycinamidine synthase subunit PurL from Mycobacteroides abscessus (strain ATCC 19977 / DSM 44196 / CCUG 20993 / CIP 104536 / JCM 13569 / NCTC 13031 / TMC 1543 / L948) (Mycobacterium abscessus).